The primary structure comprises 119 residues: Large ribosomal subunit protein uL18 (119 aa).

This sequence belongs to the universal ribosomal protein uL18 family. Part of the 50S ribosomal subunit; part of the 5S rRNA/L5/L18/L25 subcomplex. Contacts the 5S and 23S rRNAs.

Its function is as follows. This is one of the proteins that bind and probably mediate the attachment of the 5S RNA into the large ribosomal subunit, where it forms part of the central protuberance. The chain is Large ribosomal subunit protein uL18 from Clostridium botulinum (strain Alaska E43 / Type E3).